The chain runs to 457 residues: Glutamate--tRNA ligase 1 (457 aa).

Positions 9 to 19 (PSPTGYIHIGN) match the 'HIGH' region motif. A 'KMSKS' region motif is present at residues 250-254 (GLSKR). K253 provides a ligand contact to ATP.

The protein belongs to the class-I aminoacyl-tRNA synthetase family. Glutamate--tRNA ligase type 1 subfamily. As to quaternary structure, monomer.

It localises to the cytoplasm. It catalyses the reaction tRNA(Glu) + L-glutamate + ATP = L-glutamyl-tRNA(Glu) + AMP + diphosphate. Functionally, catalyzes the attachment of glutamate to tRNA(Glu) in a two-step reaction: glutamate is first activated by ATP to form Glu-AMP and then transferred to the acceptor end of tRNA(Glu). This chain is Glutamate--tRNA ligase 1, found in Brucella ovis (strain ATCC 25840 / 63/290 / NCTC 10512).